The following is a 345-amino-acid chain: NADPH-dependent curcumin reductase (345 aa).

A compositionally biased stretch (basic residues) spans 1–10 (MGQQKQRNRR). The segment at 1–24 (MGQQKQRNRRWVLASRPHGAPVPE) is disordered. Residues Lys186, Asn225, and Asn333 each coordinate NADP(+).

Homodimer.

It catalyses the reaction tetrahydrocurcumin + 2 NADP(+) = curcumin + 2 NADPH + 2 H(+). It carries out the reaction tetrahydrocurcumin + NADP(+) = dihydrocurcumin + NADPH + H(+). The enzyme catalyses dihydrocurcumin + NADP(+) = curcumin + NADPH + H(+). With respect to regulation, inhibited by thiol-specific reagents (p-chloromercuribenzoate and 5,5'-dithio-bis-2-nitrobenzoate). Catalyzes the metal-independent reduction of curcumin to dihydrocurcumin (DHC) as an intermediate product, followed by further reduction to tetrahydrocurcumin (THC) as an end product. It also acts on 3-octene-2-one, 3-hepten-2-one, resveratrol, and trans-2-octenal. The protein is NADPH-dependent curcumin reductase of Escherichia coli (strain K12).